The primary structure comprises 677 residues: UvrABC system protein B (677 aa).

Residues 27 to 192 form the Helicase ATP-binding domain; the sequence is ANLGQGVRDQ…QRNDFDFHRG (166 aa). Position 40–47 (40–47) interacts with ATP; sequence GVTGSGKT. A Beta-hairpin motif is present at residues 93-116; the sequence is YYDYYQPEAYVPASDTYIEKDSSI. A Helicase C-terminal domain is found at 432–594; the sequence is QVDDLLAECR…IEPRTIRKSL (163 aa). Residues 638–673 form the UVR domain; sequence AKHIQKLEREMREAAKELEFERAATLRDRIRLLRER.

This sequence belongs to the UvrB family. In terms of assembly, forms a heterotetramer with UvrA during the search for lesions. Interacts with UvrC in an incision complex.

Its subcellular location is the cytoplasm. The UvrABC repair system catalyzes the recognition and processing of DNA lesions. A damage recognition complex composed of 2 UvrA and 2 UvrB subunits scans DNA for abnormalities. Upon binding of the UvrA(2)B(2) complex to a putative damaged site, the DNA wraps around one UvrB monomer. DNA wrap is dependent on ATP binding by UvrB and probably causes local melting of the DNA helix, facilitating insertion of UvrB beta-hairpin between the DNA strands. Then UvrB probes one DNA strand for the presence of a lesion. If a lesion is found the UvrA subunits dissociate and the UvrB-DNA preincision complex is formed. This complex is subsequently bound by UvrC and the second UvrB is released. If no lesion is found, the DNA wraps around the other UvrB subunit that will check the other stand for damage. The sequence is that of UvrABC system protein B from Nitratidesulfovibrio vulgaris (strain DP4) (Desulfovibrio vulgaris).